A 288-amino-acid chain; its full sequence is NAD(P)H-hydrate epimerase (288 aa).

The transit peptide at 1 to 32 (MSGLRALLGLGLLVAGSRLSRVRVQAGSCRAG) directs the protein to the mitochondrion. The residue at position 49 (serine 49) is a Phosphoserine. The YjeF N-terminal domain occupies 65 to 275 (AQAVDQELFN…ALEKKYQLNL (211 aa)). A (6S)-NADPHX-binding site is contributed by 119–123 (NNGGD). Asparagine 120 serves as a coordination point for K(+). Lysine 144 is modified (N6-succinyllysine). Position 185 (aspartate 185) interacts with K(+). Residues 189–195 (GFSFTGE) and aspartate 218 contribute to the (6S)-NADPHX site. Serine 221 contacts K(+).

Belongs to the NnrE/AIBP family. As to quaternary structure, homodimer. Interacts with APOA1 and APOA2. Requires K(+) as cofactor. Post-translationally, undergoes physiological phosphorylation during sperm capacitation, downstream to PKA activation.

The protein resides in the mitochondrion. It localises to the secreted. It catalyses the reaction (6R)-NADHX = (6S)-NADHX. The enzyme catalyses (6R)-NADPHX = (6S)-NADPHX. In terms of biological role, catalyzes the epimerization of the S- and R-forms of NAD(P)HX, a damaged form of NAD(P)H that is a result of enzymatic or heat-dependent hydration. This is a prerequisite for the S-specific NAD(P)H-hydrate dehydratase to allow the repair of both epimers of NAD(P)HX. Accelerates cholesterol efflux from endothelial cells to high-density lipoprotein (HDL) and thereby regulates angiogenesis. This Bos taurus (Bovine) protein is NAD(P)H-hydrate epimerase.